The following is a 128-amino-acid chain: LIM domain-containing protein 2 (128 aa).

M1 bears the N-acetylmethionine mark. The tract at residues 1–25 is disordered; sequence MFQAAGAAQATPSHEAKGGGSSSTV. The 61-residue stretch at 39–99 folds into the LIM zinc-binding domain; sequence ETCAACQKTV…KPHFQQLFKS (61 aa). Zn(2+) is bound by residues C41, C44, H62, C65, C68, C71, C89, and H92.

In terms of assembly, interacts with ILK.

It is found in the cytoplasm. It localises to the nucleus. Its function is as follows. Acts as an activator of the protein-kinase ILK, thereby regulating cell motility. This is LIM domain-containing protein 2 (LIMD2) from Bos taurus (Bovine).